The chain runs to 160 residues: Anaerobic nitrite reductase HBII (160 aa).

The Globin domain occupies 8 to 157 (GFTEEQEALV…LVAAIKLEMK (150 aa)). Residues 41–45 (EIAPS) carry the Homodimerization motif. The heme b site is built by serine 51, lysine 65, histidine 69, lysine 99, serine 103, and histidine 104. The short motif at 111 to 123 (DEHFEVTKFALLE) is the Homodimerization element.

It belongs to the plant globin family. Homodimer. It depends on heme b as a cofactor.

The protein resides in the cytoplasm. It is found in the nucleus. The enzyme catalyses Fe(III)-heme b-[protein] + nitric oxide + H2O = Fe(II)-heme b-[protein] + nitrite + 2 H(+). Its function is as follows. Phytoglobin that reduces nitrite to nitric oxide (NO) under anoxic conditions (e.g. during flooding or in waterlogged soil) and upon root nodulation. Required for general plant development and during nodulation, especially for the onset of symbiosis. Monitors nitric oxide (NO) levels during early phase of the nitrogen-fixing symbiosis and buffers oxygen in functioning nodules. May not function as an oxygen storage or transport protein. Has an unusually high affinity for O(2) through a hexacoordinate heme iron because of a very low dissociation constant. In Casuarina glauca (Swamp oak), this protein is Anaerobic nitrite reductase HBII.